Here is a 139-residue protein sequence, read N- to C-terminus: DNA-directed RNA polymerase II subunit Rpb4 (139 aa).

The protein belongs to the eukaryotic RPB4 RNA polymerase subunit family. As to quaternary structure, RNA polymerase II consists of 12 different subunits.

It localises to the nucleus. It is found in the chromosome. Functionally, DNA-dependent RNA polymerase catalyzes the transcription of DNA into RNA using the four ribonucleoside triphosphates as substrates. Associates with POLR2G. The protein is DNA-directed RNA polymerase II subunit Rpb4 of Drosophila melanogaster (Fruit fly).